Reading from the N-terminus, the 510-residue chain is Global transcription regulator sge1 (510 aa).

3 disordered regions span residues 94-152, 393-438, and 469-510; these read PPGE…ASRN, HPFM…QQHS, and LGGT…MGRL. The span at 123–143 shows a compositional bias: low complexity; it reads NTGMNGTATGANAANLSSAGS. 2 stretches are compositionally biased toward polar residues: residues 471–480 and 501–510; these read GTNTDQSQPF and PGSNNSMGRL.

It belongs to the MIT1/WOR1 family.

It is found in the nucleus. Its function is as follows. Global transcriptional regulator of pathogenicity. Differentially regulates expression of effector genes. Also required for radial growth and production of asexual conidiospores, and plays a role in mycelium pigmentation. Not required for induction of Ave1, the effector that activates resistance mediated by the Ve1 immune receptor in tomato. The sequence is that of Global transcription regulator sge1 from Verticillium dahliae (strain VdLs.17 / ATCC MYA-4575 / FGSC 10137) (Verticillium wilt).